The primary structure comprises 167 residues: Signal peptidase complex catalytic subunit SEC11 (167 aa).

The Cytoplasmic segment spans residues 1–6; that stretch reads MNIRQQ. The helical; Signal-anchor for type II membrane protein transmembrane segment at 7-24 threads the bilayer; sequence LTKFLGLFLTLASAFMFW. The Lumenal portion of the chain corresponds to 25–167; the sequence is KGLSVVTNSH…LALSSLLGSE (143 aa). Residues S44, H83, and D109 each act as charge relay system in the active site. A C-terminal short (CTS) helix region spans residues 153 to 164; it reads ALMGMLALSSLL.

It belongs to the peptidase S26B family. As to quaternary structure, component of the signal peptidase complex (SPC) composed of a catalytic subunit SEC11 and three accessory subunits SPC1, SPC2 and SPC3. The complex induces a local thinning of the ER membrane which is used to measure the length of the signal peptide (SP) h-region of protein substrates. This ensures the selectivity of the complex towards h-regions shorter than 18-20 amino acids. SPC associates with the translocon complex.

It is found in the endoplasmic reticulum membrane. It carries out the reaction Cleavage of hydrophobic, N-terminal signal or leader sequences from secreted and periplasmic proteins.. Its function is as follows. Catalytic component of the signal peptidase complex (SPC) which catalyzes the cleavage of N-terminal signal sequences from nascent proteins as they are translocated into the lumen of the endoplasmic reticulum. Specifically cleaves N-terminal signal peptides that contain a hydrophobic alpha-helix (h-region) shorter than 18-20 amino acids. This chain is Signal peptidase complex catalytic subunit SEC11 (SEC11), found in Eremothecium gossypii (strain ATCC 10895 / CBS 109.51 / FGSC 9923 / NRRL Y-1056) (Yeast).